The sequence spans 162 residues: Ribosome maturation factor RimM (162 aa).

The PRC barrel domain maps to 86–160 (EGRYYYFALI…GIHVDPIPGL (75 aa)).

Belongs to the RimM family. In terms of assembly, binds ribosomal protein uS19.

Its subcellular location is the cytoplasm. In terms of biological role, an accessory protein needed during the final step in the assembly of 30S ribosomal subunit, possibly for assembly of the head region. Essential for efficient processing of 16S rRNA. May be needed both before and after RbfA during the maturation of 16S rRNA. It has affinity for free ribosomal 30S subunits but not for 70S ribosomes. The protein is Ribosome maturation factor RimM of Thermus thermophilus (strain ATCC BAA-163 / DSM 7039 / HB27).